A 365-amino-acid polypeptide reads, in one-letter code: 3-dehydroquinate synthase (365 aa).

NAD(+)-binding positions include 106–110, 130–131, K142, K151, and 169–172; these read GVIGD, TT, and FFAT. Residues E184, H247, and H264 each contribute to the Zn(2+) site.

It belongs to the sugar phosphate cyclases superfamily. Dehydroquinate synthase family. Co(2+) serves as cofactor. It depends on Zn(2+) as a cofactor. NAD(+) is required as a cofactor.

It is found in the cytoplasm. The catalysed reaction is 7-phospho-2-dehydro-3-deoxy-D-arabino-heptonate = 3-dehydroquinate + phosphate. Its pathway is metabolic intermediate biosynthesis; chorismate biosynthesis; chorismate from D-erythrose 4-phosphate and phosphoenolpyruvate: step 2/7. In terms of biological role, catalyzes the conversion of 3-deoxy-D-arabino-heptulosonate 7-phosphate (DAHP) to dehydroquinate (DHQ). In Listeria monocytogenes serotype 4b (strain CLIP80459), this protein is 3-dehydroquinate synthase.